The sequence spans 69 residues: Toxin Tz2 (69 aa).

The N-terminal stretch at 1-7 (IEVVMGG) is a signal peptide. The LCN-type CS-alpha/beta domain maps to 8–69 (KEGYLLDKSN…KMWDLKTNKC (62 aa)). Intrachain disulfides connect C19–C69, C23–C45, C31–C50, and C35–C52.

This sequence belongs to the long (4 C-C) scorpion toxin superfamily. Sodium channel inhibitor family. Beta subfamily. Expressed by the venom gland.

It localises to the secreted. Its function is as follows. Beta toxins bind voltage-independently at site-4 of sodium channels (Nav) and shift the voltage of activation toward more negative potentials thereby affecting sodium channel activation and promoting spontaneous and repetitive firing. The polypeptide is Toxin Tz2 (Tityus zulianus (Venezuelan scorpion)).